Consider the following 257-residue polypeptide: THAP domain-containing protein 10 (257 aa).

A THAP-type zinc finger spans residues 1–90 (MPARCVAAHC…LVAGAVPTLH (90 aa)). Residues 154–168 (QPHADNPSNTVTSVP) show a composition bias toward polar residues. Residues 154-178 (QPHADNPSNTVTSVPTHCEEGPVHK) are disordered.

The polypeptide is THAP domain-containing protein 10 (THAP10) (Homo sapiens (Human)).